Reading from the N-terminus, the 250-residue chain is MSMRDVLISRLIVERYFEKLRNSLELDVAIVGAGPSGLTAAYELAKNGFRVAVFEERNTPGGGIWGGGMMFNEIVLEKELENFLKEVEIEYEVKEDHIVVDSVHFASGLLYRATKAGAIVFNNVSVEDVAVQNGRVCGVVVNWGPTVRLGLHVDPITVKASFVVDGTGHPANVVSLLAKRGLVEMKTEFPMDADEAEKFVVDNTGEIFPGLLVSGMAVCAVHGGPRMGPIFGGMILSGQKVARIVSERLR.

NAD(+)-binding positions include Ser36, 55–56, Gly63, Val126, and 152–154; these read EE and HVD. The Fe cation site is built by Asp154 and His169. Met216 contacts NAD(+). Position 226 (Arg226) interacts with glycine.

It belongs to the THI4 family. In terms of assembly, homooctamer; tetramer of dimers. Fe(2+) serves as cofactor.

The catalysed reaction is hydrogen sulfide + glycine + NAD(+) = ADP-5-ethyl-4-methylthiazole-2-carboxylate + nicotinamide + 3 H2O + H(+). It participates in cofactor biosynthesis; thiamine diphosphate biosynthesis. In terms of biological role, involved in the biosynthesis of the thiazole moiety of thiamine. Catalyzes the conversion of NAD and glycine to adenosine diphosphate 5-(2-hydroxyethyl)-4-methylthiazole-2-carboxylate (ADT), an adenylated thiazole intermediate, using free sulfide as a source of sulfur. The chain is Thiamine thiazole synthase from Thermotoga maritima (strain ATCC 43589 / DSM 3109 / JCM 10099 / NBRC 100826 / MSB8).